A 319-amino-acid polypeptide reads, in one-letter code: Tyrosine--tRNA ligase (319 aa).

Tyrosine 35 contributes to the L-tyrosine binding site. The 'HIGH' region motif lies at 40–48 (PSGKIHLGH). Residues tyrosine 156, glutamine 160, aspartate 163, and glutamine 178 each contribute to the L-tyrosine site. The 'KMSKS' region motif lies at 213–217 (KMSSS). An ATP-binding site is contributed by serine 216.

The protein belongs to the class-I aminoacyl-tRNA synthetase family. TyrS type 3 subfamily. As to quaternary structure, homodimer.

The protein localises to the cytoplasm. It catalyses the reaction tRNA(Tyr) + L-tyrosine + ATP = L-tyrosyl-tRNA(Tyr) + AMP + diphosphate + H(+). Its function is as follows. Catalyzes the attachment of tyrosine to tRNA(Tyr) in a two-step reaction: tyrosine is first activated by ATP to form Tyr-AMP and then transferred to the acceptor end of tRNA(Tyr). In Methanobrevibacter smithii (strain ATCC 35061 / DSM 861 / OCM 144 / PS), this protein is Tyrosine--tRNA ligase.